The primary structure comprises 771 residues: Probable exo-1,4-beta-xylosidase bxlB (771 aa).

Positions 1–25 (MVGLTPQHYGNAIALMTYLASTALA) are cleaved as a signal peptide. A glycan (N-linked (GlcNAc...) asparagine) is linked at Asn-67. Asp-293 is a catalytic residue. Residues Asn-305, Asn-345, Asn-423, Asn-462, and Asn-463 are each glycosylated (N-linked (GlcNAc...) asparagine).

The protein belongs to the glycosyl hydrolase 3 family.

The protein resides in the secreted. The enzyme catalyses Hydrolysis of (1-&gt;4)-beta-D-xylans, to remove successive D-xylose residues from the non-reducing termini.. Its pathway is glycan degradation; xylan degradation. Its function is as follows. Xylan 1,4-beta-xylosidase involved in the hydrolysis of xylan, a major structural heterogeneous polysaccharide found in plant biomass representing the second most abundant polysaccharide in the biosphere, after cellulose. The polypeptide is Probable exo-1,4-beta-xylosidase bxlB (bxlB) (Aspergillus clavatus (strain ATCC 1007 / CBS 513.65 / DSM 816 / NCTC 3887 / NRRL 1 / QM 1276 / 107)).